The chain runs to 297 residues: Pyridoxal 5'-phosphate synthase subunit Pdx1 (297 aa).

Asp27 serves as a coordination point for D-ribose 5-phosphate. Lys84 functions as the Schiff-base intermediate with D-ribose 5-phosphate in the catalytic mechanism. A D-ribose 5-phosphate-binding site is contributed by Gly156. Arg168 contacts D-glyceraldehyde 3-phosphate. D-ribose 5-phosphate-binding positions include Gly217 and 238–239 (GS).

This sequence belongs to the PdxS/SNZ family. In terms of assembly, homohexamer and homododecamer. In the presence of Pdx2, forms a dodecamer of heterodimers.

The enzyme catalyses aldehydo-D-ribose 5-phosphate + D-glyceraldehyde 3-phosphate + L-glutamine = pyridoxal 5'-phosphate + L-glutamate + phosphate + 3 H2O + H(+). It participates in cofactor biosynthesis; pyridoxal 5'-phosphate biosynthesis. Its function is as follows. Catalyzes the formation of pyridoxal 5'-phosphate from ribose 5-phosphate (RBP), glyceraldehyde 3-phosphate (G3P) and ammonia. The ammonia is provided by Pdx2. Can also use ribulose 5-phosphate and dihydroxyacetone phosphate as substrates, resulting from enzyme-catalyzed isomerization of RBP and G3P, respectively. In Plasmodium berghei, this protein is Pyridoxal 5'-phosphate synthase subunit Pdx1.